Here is a 1612-residue protein sequence, read N- to C-terminus: DNA (cytosine-5)-methyltransferase PliMCI (1612 aa).

The DMAP1-binding domain maps to 7–101 (CDQVIPPNVR…NGDTKEEASS (95 aa)). A disordered region spans residues 87 to 338 (TCSPVNGDTK…TAESKQPPLR (252 aa)). A compositionally biased stretch (basic and acidic residues) spans 94 to 110 (DTKEEASSNGKDDEKAE). Positions 115-131 (NGTTSNGSTTNGSSGSS) are enriched in low complexity. The segment covering 132 to 142 (KANGHTNGGYV) has biased composition (polar residues). Low complexity predominate over residues 143–154 (QSSSQEETGTSQ). 3 stretches are compositionally biased toward basic and acidic residues: residues 193-212 (VLGD…KKDV), 222-232 (EESATPDEKTL), and 260-289 (KKEE…KKEE). The CXXC-type zinc finger occupies 626-672 (ASERKKRCGVCEICQAPDCGKCTACKDMIKFGGSGKAKQACKDRRCP). Positions 633, 636, 639, 644, 647, 650, 666, and 671 each coordinate Zn(2+). The segment at 677–708 (QEADENDIDEMDNSSNKENKDEKKAKKGRKLE) is disordered. Residues 678-688 (EADENDIDEMD) are compositionally biased toward acidic residues. The segment covering 691–708 (SNKENKDEKKAKKGRKLE) has biased composition (basic and acidic residues). BAH domains lie at 743 to 871 (EKIE…EDYE) and 967 to 1089 (NYRK…EDPP). A disordered region spans residues 1084 to 1121 (CFEDPPSKSRSTRMKGKGKGKGKGKAKGKIAVEKEEEK). Positions 1093–1111 (RSTRMKGKGKGKGKGKAKG) are enriched in basic residues. Positions 1131–1590 (LKCLDVFAGC…MEIKVCLQTK (460 aa)) constitute an SAM-dependent MTase C5-type domain. Residues 1142–1143 (GL), 1160–1161 (EK), 1182–1183 (DC), and C1183 each bind S-adenosyl-L-methionine. The active site involves C1218. Positions 1569 and 1571 each coordinate S-adenosyl-L-methionine.

The protein belongs to the class I-like SAM-binding methyltransferase superfamily. C5-methyltransferase family.

The protein localises to the nucleus. It carries out the reaction a 2'-deoxycytidine in DNA + S-adenosyl-L-methionine = a 5-methyl-2'-deoxycytidine in DNA + S-adenosyl-L-homocysteine + H(+). Functionally, methylates CpG residues. This chain is DNA (cytosine-5)-methyltransferase PliMCI (DNMT), found in Paracentrotus lividus (Common sea urchin).